The primary structure comprises 632 residues: 1-deoxy-D-xylulose-5-phosphate synthase (632 aa).

Thiamine diphosphate contacts are provided by residues His79 and 120–122; that span reads GHA. Residue Asp152 participates in Mg(2+) binding. Thiamine diphosphate contacts are provided by residues 153–154, Asn181, Phe293, and Glu377; that span reads GS. Residue Asn181 participates in Mg(2+) binding.

It belongs to the transketolase family. DXPS subfamily. As to quaternary structure, homodimer. Requires Mg(2+) as cofactor. The cofactor is thiamine diphosphate.

It carries out the reaction D-glyceraldehyde 3-phosphate + pyruvate + H(+) = 1-deoxy-D-xylulose 5-phosphate + CO2. It participates in metabolic intermediate biosynthesis; 1-deoxy-D-xylulose 5-phosphate biosynthesis; 1-deoxy-D-xylulose 5-phosphate from D-glyceraldehyde 3-phosphate and pyruvate: step 1/1. In terms of biological role, catalyzes the acyloin condensation reaction between C atoms 2 and 3 of pyruvate and glyceraldehyde 3-phosphate to yield 1-deoxy-D-xylulose-5-phosphate (DXP). The chain is 1-deoxy-D-xylulose-5-phosphate synthase from Phocaeicola vulgatus (strain ATCC 8482 / DSM 1447 / JCM 5826 / CCUG 4940 / NBRC 14291 / NCTC 11154) (Bacteroides vulgatus).